The following is a 1054-amino-acid chain: MGTAQVLPGILQKHCCILPDRNTESQCTLCGEPEEEEAGDLVQPGISFPGPAEEDLDPQYSWSPTQHFNEERYSPAPRSMKGLSGSRTQPPLCSGHTCGLAPPEDCEHLHHGPDARPPYLLSPADSCPGGRHRCSPRSSVHSECVMMPVVLGDHVSSSTFPRMHYSSHYDTRDDCAVAHAGAKINRIPANLLDQFEKQLPLHRDGFHTLQYQRTSAAAEQRSESPGRIRHLVHSVQKLFTKSHSLEGSSKSNANGTKADGRADDHHHAHHAKHSKRSKSKERKPEGKPRPGMSSWWSSDDNLDSDSTYRTPSVLNRHHLGPVAHCYPDALQSPFGDLSLKTSKSNNDVKCSACEGLALTPDAKYLKRSSWSTLTVSQAKEAYRKSSLNLDKPLLHQDAKPALRPCHYLQVPQDEWGGYPTGGKDEEIPCRRMRSGSYIKAMGDEESGESDSSPKTSPKSAILPEPLLKSIGQRPLGEHQTQTYLQAASDVPVGHSLDPAANYNSPKFRSRNQSYMRAVSTLSQASCVSQVSEAEINGQFESVCESVFSEVESQAMDALDLPGCFRTRSHSYLRAIQAGYSQDDECIPMMTPSDITSTIRSTAAVSYTNYKKTPPPVPPRTTSKPLISVTAQSSTESTQDAYQDSRAQRMSPWPQDSRGLYNSTDSLDSNKAMNLALETAAAQRHLPESQSSSVRTSDKAILVSKAEELLKSRCSSIGIQDSEFPEHQPYPRSDVETATDSDTESRGLREYHSVGVQVEDEKRHGRFKRSNSVTAAVQADLELEGFPGHITTEDKGLQFGSSFQRHSEPSTPTQYSAVRTVRTQGLFSYREDYRTQVDTSTLPPPDPWLEPAIDTVETGRMSPCRRDGSWFLKLLHAETKRMEGWCKEMEREAEENDLSEEILGKIRSAVGSAQLLMSQKFQQFYWLCQQNMDPSAMPRPTSQDLAGYWDMLQLSIEDVSMKFDELQRLRLNDWKMMESPERKEERKVPPPIPKKPPKGKFPITREKSLDLPDRQRQEARRRLMAAKRAASFRQNSASERADSIEIYIPEAQTRL.

Disordered regions lie at residues 32 to 87 and 242 to 301; these read EPEE…SGSR and SHSL…SDDN. Residues 242–255 are compositionally biased toward polar residues; that stretch reads SHSLEGSSKSNANG. The segment covering 267 to 281 has biased composition (basic residues); sequence HAHHAKHSKRSKSKE. A compositionally biased stretch (low complexity) spans 289-299; sequence RPGMSSWWSSD. S298, S304, S386, and S452 each carry phosphoserine. Disordered stretches follow at residues 442–464 and 609–666; these read GDEE…ILPE and YKKT…TDSL. A compositionally biased stretch (polar residues) spans 628–641; sequence VTAQSSTESTQDAY. Residues S662, S665, S668, and S715 each carry the phosphoserine modification. The disordered stretch occupies residues 719 to 746; it reads QDSEFPEHQPYPRSDVETATDSDTESRG. Phosphothreonine is present on T738. Residues S740, S771, S806, S978, and S1007 each carry the phosphoserine modification. Composition is skewed to basic and acidic residues over residues 977 to 987 and 1002 to 1020; these read ESPERKEERKV and ITRE…EARR. The segment at 977–1021 is disordered; it reads ESPERKEERKVPPPIPKKPPKGKFPITREKSLDLPDRQRQEARRR.

This sequence belongs to the SAPAP family. As to quaternary structure, interacts with DLG1 and DLG4/PSD-95. As to expression, expressed in brain and kidney.

It localises to the cell membrane. It is found in the postsynaptic density. The protein localises to the synapse. Its function is as follows. May play a role in the molecular organization of synapses and neuronal cell signaling. Could be an adapter protein linking ion channel to the subsynaptic cytoskeleton. May induce enrichment of PSD-95/SAP90 at the plasma membrane. In Homo sapiens (Human), this protein is Disks large-associated protein 2.